A 121-amino-acid polypeptide reads, in one-letter code: Small ribosomal subunit protein uS13 (121 aa).

Residues Gly94–Lys121 are disordered. Positions Ala106–Lys121 are enriched in basic residues.

Belongs to the universal ribosomal protein uS13 family. Part of the 30S ribosomal subunit. Forms a loose heterodimer with protein S19. Forms two bridges to the 50S subunit in the 70S ribosome.

Functionally, located at the top of the head of the 30S subunit, it contacts several helices of the 16S rRNA. In the 70S ribosome it contacts the 23S rRNA (bridge B1a) and protein L5 of the 50S subunit (bridge B1b), connecting the 2 subunits; these bridges are implicated in subunit movement. Contacts the tRNAs in the A and P-sites. This is Small ribosomal subunit protein uS13 from Streptococcus sanguinis (strain SK36).